A 496-amino-acid chain; its full sequence is Pup--protein ligase (496 aa).

Position 30 (Glu30) interacts with Mg(2+). Arg73 provides a ligand contact to ATP. Position 75 (Tyr75) interacts with Mg(2+). Asp77 acts as the Proton acceptor in catalysis. Glu83 contacts Mg(2+). Residues Thr86 and Trp450 each contribute to the ATP site.

It belongs to the Pup ligase/Pup deamidase family. Pup-conjugating enzyme subfamily.

The catalysed reaction is ATP + [prokaryotic ubiquitin-like protein]-L-glutamate + [protein]-L-lysine = ADP + phosphate + N(6)-([prokaryotic ubiquitin-like protein]-gamma-L-glutamyl)-[protein]-L-lysine.. It participates in protein degradation; proteasomal Pup-dependent pathway. It functions in the pathway protein modification; protein pupylation. Catalyzes the covalent attachment of the prokaryotic ubiquitin-like protein modifier Pup to the proteasomal substrate proteins, thereby targeting them for proteasomal degradation. This tagging system is termed pupylation. The ligation reaction involves the side-chain carboxylate of the C-terminal glutamate of Pup and the side-chain amino group of a substrate lysine. In Bifidobacterium animalis subsp. lactis (strain AD011), this protein is Pup--protein ligase.